Here is a 468-residue protein sequence, read N- to C-terminus: Chromosomal replication initiator protein DnaA (468 aa).

The interval 1-84 (MSSSLWLQCL…RFEVGSRPVS (84 aa)) is domain I, interacts with DnaA modulators. The interval 80–106 (SRPVSAPKPAPTRTPADVAAESSAPAQ) is disordered. A domain II region spans residues 84 to 131 (SAPKPAPTRTPADVAAESSAPAQLQARKPVHKTWDDDPQAIAAINHRS). Residues 132-348 (NMNPKHKFDN…GALNRVIANA (217 aa)) are domain III, AAA+ region. Gly176, Gly178, Lys179, and Thr180 together coordinate ATP. Residues 349–468 (NFTGRPITID…YSNLIRTLSS (120 aa)) form a domain IV, binds dsDNA region.

It belongs to the DnaA family. As to quaternary structure, oligomerizes as a right-handed, spiral filament on DNA at oriC.

The protein localises to the cytoplasm. Plays an essential role in the initiation and regulation of chromosomal replication. ATP-DnaA binds to the origin of replication (oriC) to initiate formation of the DNA replication initiation complex once per cell cycle. Binds the DnaA box (a 9 base pair repeat at the origin) and separates the double-stranded (ds)DNA. Forms a right-handed helical filament on oriC DNA; dsDNA binds to the exterior of the filament while single-stranded (ss)DNA is stabiized in the filament's interior. The ATP-DnaA-oriC complex binds and stabilizes one strand of the AT-rich DNA unwinding element (DUE), permitting loading of DNA polymerase. After initiation quickly degrades to an ADP-DnaA complex that is not apt for DNA replication. Binds acidic phospholipids. This chain is Chromosomal replication initiator protein DnaA, found in Vibrio parahaemolyticus serotype O3:K6 (strain RIMD 2210633).